A 415-amino-acid polypeptide reads, in one-letter code: uncharacterized protein (415 aa).

The 55-residue stretch at 1 to 55 (MSTGTVTIDRLGAQGDGVARTEAGPVFAPFTLPGETVSLAVNKANGTLISLKEAS) folds into the TRAM domain. [4Fe-4S] cluster is bound by residues C63, C75, C78, and C152. Positions 252, 279, 299, and 347 each coordinate S-adenosyl-L-methionine. The Nucleophile role is filled by C373.

The protein belongs to the class I-like SAM-binding methyltransferase superfamily. RNA M5U methyltransferase family.

This is an uncharacterized protein from Rhizobium meliloti (strain 1021) (Ensifer meliloti).